Here is a 142-residue protein sequence, read N- to C-terminus: Large ribosomal subunit protein uL11 (142 aa).

This sequence belongs to the universal ribosomal protein uL11 family. As to quaternary structure, part of the ribosomal stalk of the 50S ribosomal subunit. Interacts with L10 and the large rRNA to form the base of the stalk. L10 forms an elongated spine to which L12 dimers bind in a sequential fashion forming a multimeric L10(L12)X complex. Post-translationally, one or more lysine residues are methylated.

Its function is as follows. Forms part of the ribosomal stalk which helps the ribosome interact with GTP-bound translation factors. This chain is Large ribosomal subunit protein uL11, found in Pectobacterium atrosepticum (strain SCRI 1043 / ATCC BAA-672) (Erwinia carotovora subsp. atroseptica).